The following is a 321-amino-acid chain: tRNA(Ile)-lysidine synthase (321 aa).

20–25 lines the ATP pocket; the sequence is SGGADS.

This sequence belongs to the tRNA(Ile)-lysidine synthase family.

It is found in the cytoplasm. It carries out the reaction cytidine(34) in tRNA(Ile2) + L-lysine + ATP = lysidine(34) in tRNA(Ile2) + AMP + diphosphate + H(+). Ligates lysine onto the cytidine present at position 34 of the AUA codon-specific tRNA(Ile) that contains the anticodon CAU, in an ATP-dependent manner. Cytidine is converted to lysidine, thus changing the amino acid specificity of the tRNA from methionine to isoleucine. This chain is tRNA(Ile)-lysidine synthase, found in Bordetella pertussis (strain Tohama I / ATCC BAA-589 / NCTC 13251).